Consider the following 94-residue polypeptide: MGRSSKKGPYIDPKLKKKIDELNRTGERRVIRTWARDCTIFPEMVGHTIAVHDGRRHVPIYITEQMVGHKLGEFAPTRTYRGHGKDAERTTRRR.

The segment at 73-94 (EFAPTRTYRGHGKDAERTTRRR) is disordered. Over residues 83–94 (HGKDAERTTRRR) the composition is skewed to basic and acidic residues.

This sequence belongs to the universal ribosomal protein uS19 family.

Functionally, protein S19 forms a complex with S13 that binds strongly to the 16S ribosomal RNA. The chain is Small ribosomal subunit protein uS19 from Thermomicrobium roseum (strain ATCC 27502 / DSM 5159 / P-2).